Here is a 60-residue protein sequence, read N- to C-terminus: Defensin MGD-1 (60 aa).

Cystine bridges form between Cys-4/Cys-25, Cys-10/Cys-33, Cys-14/Cys-35, and Cys-21/Cys-38. Trp-28 carries the 3-hydroxytryptophan modification. At Cys-38 the chain carries Cysteine amide. The propeptide occupies 39–60 (GGRREDVEDIFDIFDNEAADRF).

Belongs to the invertebrate defensin family. Type 2 subfamily. In terms of processing, the hydroxylation of the Trp-28 is not important for the antibacterial activity. Abundantly expressed in hemocytes.

It is found in the secreted. Functionally, active against both Gram-positive and Gram-negative bacteria but is not cytotoxic towards human erythrocytes or protozoa. This is Defensin MGD-1 (FH3) from Mytilus galloprovincialis (Mediterranean mussel).